The following is a 622-amino-acid chain: MKENEDEINKTDEKYKIKNPSNNGNNKNKNNNNNNNNNNNNNNNNNNNNNNNNNNNNNGNSNLENIEGLNKYNIYKKKKGKNESNTSLNNIYISSPNLSERSDNSIGSYCTNKTMKSENSIINIETLFRDSVSEQNSDECGSKVDKDLDEDDDDDDDETEVPELVDYSEMIVSILYPVCITMVIVVLAIRAISSSTSKNSQIVEISNDNSGGNGDSSSGADKMVFDSVVNSLIFLAVIILSTTIMVVLYKFKLMKALYAWLMGTSILLLGVFGGFLFLILLAYLNLGLDYVTFVIVVWNFSVGGIVCIFWYSPKLLNQGYLISISVLMALFFSRLPDWTTWGILSIVSIYDIFAVLCPGGPLRILIETAQKRNENIPAMIYNASIYIGMIYNEDNLENNNNNNNNNNIELNINEVDIENNNNNEDENKNNTEDGNNNNNKNKNNNNNNNNRIENENGAENSSENGSITPPPTIPNFIKDEKEINRSSGSNGFPNFKKCANDNILIGDAETNDEIVSNAESSIDSTISESYVKPKQSIRLGLGDFVFYSVLIGKAASYQITTVFTVFIAIITGLFLTLILLAVFRRALPALPMSIIFGIIVFFLTFKILIQYIYFLGENQIFV.

Basic and acidic residues predominate over residues 1–16; that stretch reads MKENEDEINKTDEKYK. 2 disordered regions span residues 1–65 and 132–160; these read MKEN…NLEN and VSEQ…DETE. The Cytoplasmic segment spans residues 1–168; that stretch reads MKENEDEINK…TEVPELVDYS (168 aa). Over residues 21–62 the composition is skewed to low complexity; it reads SNNGNNKNKNNNNNNNNNNNNNNNNNNNNNNNNNNNNNGNSN. Over residues 147 to 160 the composition is skewed to acidic residues; that stretch reads DLDEDDDDDDDETE. A helical membrane pass occupies residues 169 to 189; it reads EMIVSILYPVCITMVIVVLAI. The Lumenal portion of the chain corresponds to 190–227; that stretch reads RAISSSTSKNSQIVEISNDNSGGNGDSSSGADKMVFDS. Residues 228–248 traverse the membrane as a helical segment; sequence VVNSLIFLAVIILSTTIMVVL. Over 249-265 the chain is Cytoplasmic; the sequence is YKFKLMKALYAWLMGTS. The helical transmembrane segment at 266 to 286 threads the bilayer; the sequence is ILLLGVFGGFLFLILLAYLNL. Residues 287–289 lie on the Lumenal side of the membrane; sequence GLD. A helical membrane pass occupies residues 290 to 310; sequence YVTFVIVVWNFSVGGIVCIFW. Residue tyrosine 311 is a topological domain, cytoplasmic. A helical transmembrane segment spans residues 312 to 332; that stretch reads SPKLLNQGYLISISVLMALFF. At 333–341 the chain is on the lumenal side; sequence SRLPDWTTW. The helical transmembrane segment at 342-362 threads the bilayer; it reads GILSIVSIYDIFAVLCPGGPL. The active site involves aspartate 351. Over 363 to 538 the chain is Cytoplasmic; it reads RILIETAQKR…SYVKPKQSIR (176 aa). The interval 419-477 is disordered; sequence NNNNNEDENKNNTEDGNNNNNKNKNNNNNNNNRIENENGAENSSENGSITPPPTIPNFI. Over residues 432–466 the composition is skewed to low complexity; sequence EDGNNNNNKNKNNNNNNNNRIENENGAENSSENGS. Residues 539–559 traverse the membrane as a helical segment; sequence LGLGDFVFYSVLIGKAASYQI. Aspartate 543 is an active-site residue. Residues 560 to 562 lie on the Lumenal side of the membrane; that stretch reads TTV. The helical transmembrane segment at 563-583 threads the bilayer; the sequence is FTVFIAIITGLFLTLILLAVF. The Cytoplasmic segment spans residues 584–588; the sequence is RRALP. A PAL motif is present at residues 588 to 590; the sequence is PAL. An intramembrane region (helical) is located at residues 589–609; sequence ALPMSIIFGIIVFFLTFKILI. The Cytoplasmic portion of the chain corresponds to 610-622; sequence QYIYFLGENQIFV.

This sequence belongs to the peptidase A22A family. In terms of assembly, homodimer. Component of the gamma-secretase complex, a complex composed of a presenilin homodimer, nicastrin, aph1 and pen2.

It localises to the endoplasmic reticulum membrane. The protein localises to the golgi apparatus membrane. Probable catalytic subunit of the gamma-secretase complex, an endoprotease complex that catalyzes the intramembrane cleavage of integral membrane proteins such as Notch receptors. Requires the other members of the gamma-secretase complex to have a protease activity. In Dictyostelium discoideum (Social amoeba), this protein is Presenilin-A (psenA).